Consider the following 159-residue polypeptide: Putative 2'-deoxynucleoside 5'-phosphate N-hydrolase 1 (159 aa).

Residues 25 to 31 (FLSGSIR), Tyr40, His58, Glu104, and 126 to 128 (SAM) each bind substrate.

This sequence belongs to the 2'-deoxynucleoside 5'-phosphate N-hydrolase 1 family. In terms of assembly, monomer and homodimer.

The catalysed reaction is a pyrimidine 2'-deoxyribonucleoside 5'-phosphate + H2O = a pyrimidine nucleobase + 2-deoxy-D-ribose 5-phosphate. It catalyses the reaction a purine 2'-deoxyribonucleoside 5'-phosphate + H2O = a purine nucleobase + 2-deoxy-D-ribose 5-phosphate. Catalyzes the cleavage of the N-glycosidic bond of deoxyribonucleoside 5'-monophosphates to yield deoxyribose 5-phosphate and a purine or pyrimidine base. The polypeptide is Putative 2'-deoxynucleoside 5'-phosphate N-hydrolase 1 (Methanosarcina barkeri (strain Fusaro / DSM 804)).